A 171-amino-acid polypeptide reads, in one-letter code: MAVKIKLTRLGKIRNPQYRIAVADARTRRDGRSIEIIGRYHPKEDPSLIEINSERAQYWLSVGAQPTEPVLKLLKITGDWQKFKGLPGAEGRLKVAPPKPSKLELFNAALAEAEGGPTTEAAKPKKKAATSGAKKAAKAAEPEAAASEAAEPEAAAAPAEGGEQAESSAES.

Residues 114–171 (EGGPTTEAAKPKKKAATSGAKKAAKAAEPEAAASEAAEPEAAAAPAEGGEQAESSAES) form a disordered region. Residues 142–171 (PEAAASEAAEPEAAAAPAEGGEQAESSAES) are compositionally biased toward low complexity.

This sequence belongs to the bacterial ribosomal protein bS16 family.

The protein is Small ribosomal subunit protein bS16 of Mycolicibacterium paratuberculosis (strain ATCC BAA-968 / K-10) (Mycobacterium paratuberculosis).